Here is a 118-residue protein sequence, read N- to C-terminus: Putative membrane protein insertion efficiency factor (118 aa).

The tract at residues 76–118 is disordered; it reads WDPVPQRRPRRRDAAAADAAMSAPHACKGSPHAVVGDTNDGST. Residues 91-101 are compositionally biased toward low complexity; sequence AADAAMSAPHA.

This sequence belongs to the UPF0161 family.

Its subcellular location is the cell membrane. Functionally, could be involved in insertion of integral membrane proteins into the membrane. In Nocardia farcinica (strain IFM 10152), this protein is Putative membrane protein insertion efficiency factor.